The following is a 110-amino-acid chain: Ubiquitin-related modifier 1 (110 aa).

Residue G110 is modified to 1-thioglycine. Residue G110 forms a Glycyl lysine isopeptide (Gly-Lys) (interchain with K-? in acceptor proteins) linkage.

The protein belongs to the URM1 family. As to quaternary structure, homodimer; homodimerization may provide an autoprotection to the highly active C-terminal residue before attacking its substrates. Forms a conjugate with the target protein AHP1. In terms of processing, C-terminal thiocarboxylation occurs in 2 steps, it is first acyl-adenylated (-COAMP) via the hesA/moeB/thiF part of UBA4, then thiocarboxylated (-COSH) via the rhodanese domain of UBA4.

The protein resides in the cytoplasm. It functions in the pathway tRNA modification; 5-methoxycarbonylmethyl-2-thiouridine-tRNA biosynthesis. Its function is as follows. Acts as a sulfur carrier required for 2-thiolation of mcm(5)S(2)U at tRNA wobble positions of cytosolic tRNA(Lys), tRNA(Glu) and tRNA(Gln). Serves as sulfur donor in tRNA 2-thiolation reaction by being thiocarboxylated (-COSH) at its C-terminus by the MOCS3 homolog UBA4. The sulfur is then transferred to tRNA to form 2-thiolation of mcm(5)S(2)U. Prior mcm(5) tRNA modification by the elongator complex is required for 2-thiolation. Also acts as a ubiquitin-like protein (UBL) that is covalently conjugated via an isopeptide bond to lysine residues of target proteins such as AHP1. Conjugation does not depend on the canonical cascade of E2 ubiquitin-conjugating enzymes and/or E3 ligases. The conjugation reaction requires a thiocarboxylated C-terminus of URM1 and a peroxidatic cysteine in the target protein, as the sulfur atom of the URM1 thiocarboxyl group is transferred to redox-active cysteine residues in the target protein. Oxidative stress specifically induces the formation of UBL-protein conjugates. Covalent modification with URM1 promotes the phase separation of a wide range of proteins into condensates like stress granules. This is Ubiquitin-related modifier 1 from Chaetomium thermophilum (strain DSM 1495 / CBS 144.50 / IMI 039719) (Thermochaetoides thermophila).